Here is a 432-residue protein sequence, read N- to C-terminus: Putative transposase A625R (432 aa).

C375, C378, C393, and C395 together coordinate Zn(2+).

This sequence in the N-terminal section; belongs to the transposase 2 family. It in the C-terminal section; belongs to the transposase 35 family.

This chain is Putative transposase A625R, found in Chlorella (PBCV-1).